The primary structure comprises 519 residues: Circadian clock oscillator protein KaiC (519 aa).

The 247-residue stretch at 1–247 (MTSAEMTSPN…TITDHGINIF (247 aa)) folds into the KaiC 1 domain. Positions 49, 50, 51, 52, 53, and 54 each coordinate ATP. T53 contributes to the Mg(2+) binding site. The Proton acceptor in CI (KaiC 1) role is filled by E77. S89 lines the ATP pocket. The segment at 115-122 (QEVVGGFD) is B-loop, required to bind KaiB and SasA. ATP contacts are provided by K224, L225, R226, T228, H230, T240, and D241. The interval 248–260 (PLGAMRLTQRSSN) is linker. One can recognise a KaiC 2 domain in the interval 261-519 (VRVSSGVVRL…RGVQEKGPES (259 aa)). The ATP site is built by T290, G291, T292, G293, K294, T295, and L296. T295 is a Mg(2+) binding site. Residue E318 participates in Mg(2+) binding. E318 (proton acceptor in CII (KaiC 2)) is an active-site residue. W331 lines the ATP pocket. A Phosphoserine; by autocatalysis modification is found at S431. T432 is subject to Phosphothreonine; by autocatalysis. ATP-binding residues include R451, K457, M458, R459, S461, H463, and K465. The segment at 488 to 497 (RIISGSPTRI) is A-loop, interacts with KaiA.

Belongs to the KaiC family. In terms of assembly, homohexamer resembling 2 stacked donuts with a central pore nearly blocked on one side; hexamerization is dependent on ATP-binding. Binds 12 ATP; 6 between each subunit in both layers. KaiB only binds to phospho-Ser-431 KaiC (not doubly phosphorylated KaiC). Complex formation between KaiB and KaiC is regulated by the phosphorylation state of KaiC and by an ATP hydrolysis-driven conformation change in the CI ring of KaiC; complex formation is slow. Slow complex formation is crucial for the timing of the circadian period. KaiB switches to a thioredoxin-like form called KaiB(fs) when bound to KaiC. The KaiABC complex composition changes during the circadian cycle to control KaiC phosphorylation. Complexes KaiC(6), KaiA(2-4):KaiC(6), KaiB(6):KaiC(6) and KaiC(6):KaiB(6):KaiA(12) are among the most important forms, many form cooperatively. Interacts directly with KaiB and SasA. The CI domain binds to KaiB and SasA; as they have a similar fold they compete for the same site on CI. CikA interacts with this protein in the clock complex. Binds to the C-terminus of KaiA via a coiled-coil structure. Forms KaiC(6):KaiB(1) and KaiC(6):KaiB(6) complexes. Mg(2+) serves as cofactor. Post-translationally, has a 4 step phosphorylation cycle; the autokinase acts first on Thr-432, then Ser-431. When Ser-431 is modified KaiC switches to an autophosphatase mode, acting first on phospho-Thr-432 then phospho-Ser-431. Phosphorylated and dephosphorylated on serine/threonine residues by autocatalysis. Unphosphorylated, mono- and di-phosphorylated forms exist. The phosphorylated form correlates with clock speed. The presence of KaiA increases phosphorylation and stabilizes these forms. In terms of processing, phosphorylated on serine and threonine residues by autocatalysis. Has a 4 step phosphorylation cycle; the autokinase acts first on Thr-432, then Ser-431. When Ser-431 is modified KaiC switches to an autophosphatase mode, acting first on phospho-Thr-432 then phospho-Ser-431.

The catalysed reaction is L-seryl-[protein] + ATP = O-phospho-L-seryl-[protein] + ADP + H(+). It catalyses the reaction L-threonyl-[protein] + ATP = O-phospho-L-threonyl-[protein] + ADP + H(+). It carries out the reaction ATP + H2O = ADP + phosphate + H(+). Interaction with KaiA stimulates autophosphorylation, KaiC interaction with KaiB sequesters KaiA, preventing it stimulating the KaiC kinase, leading to autodephosphorylation. A KaiA dimer is sufficient to enhance KaiC phosphorylation. Interaction of KaiA with the A-loop stimulates autokinase activity. In terms of biological role, the KaiABC oscillator complex constitutes the main circadian regulator in cyanobacteria. Complex composition changes during the circadian cycle to control KaiC phosphorylation; KaiA stimulates KaiC autophosphorylation, while KaiB sequesters KaiA, leading to KaiC autodephosphorylation. The Kai complex controls chromosome condensation, leading to a transcription accessible chromosome during the first half of the circadian cycle and a compact, less transcription-accessible chromosome during the latter half. Clock output pathways impact the RpaA transcriptional regulator. Circadian oscillations can be generated in vitro by incubating KaiA, KaiB and KaiC with 1 mM ATP. The cycle is self-sustainable for at least 3 cycles and resistant to temperature changes. Mutations in KaiC alone prolong or reduce the circadian rhythm. A very robust clock is reconstituted with KaiA, KaiB, KaiC, SasA, CikA and RpaA; output is measured by transcription from an appropriate reporter. The level of KaiC phosphorylation and KaiC ATPase activity represent the key features of the biochemical oscillator. KaiA homodimer binding to the KaiC CII domain stimulates KaiC's ATPase activity and forms KaiA(2-4):KaiC(6) complexes, which stimulate KaiC autophosphorylation first on Thr-432 then Ser-431. Phospho-Ser-431-KaiC accumulation triggers binding of KaiB to CI to form the KaiB(6):KaiC(6) complex, leading to changes in the output regulators CikA and SasA. KaiB(6):KaiC(6) formation exposes a site for KaiA binding that sequesters KaiA from the CII domain, making the KaiC(6):KaiB(6):KaiA(12) complex that results in KaiC autodephosphorylation. Complete dephosphorylation of KaiC leads to dissociation of KaiA(2):KaiB(1), completing 1 cycle of the Kai oscillator. Functionally, has a weak, temperature-independent ATPase activity (about 15 molecules of ATP per day); the addition of KaiA and KaiB increases activity slightly and makes the activity oscillate with a circadian period in vitro for over 60 hours. ATPase activity defines the circadian period. The phosphorylation state of KaiC modulates its ATPase activity and effects KaiB binding. Its function is as follows. There are several clock output pathways; SasA/RpaA, CikA/RpaA and LabA. KaiC enhances the autophosphorylation activity of SasA, which then transfers its phosphate group to RpaA to activate it. Phosphotransfer is maximal when KaiC phosphorylation is active during the circadian cycle. KaiB and KaiC together enhance the phosphatase activity of CikA on phospho-RpaA. In terms of biological role, kaiC is important for metabolic partitioning during the dark to light shift, modulating the balance between the Calvin cycle and oxidative pentose phosphate pathway under natural growth conditions. The sequence is that of Circadian clock oscillator protein KaiC from Synechococcus elongatus (strain ATCC 33912 / PCC 7942 / FACHB-805) (Anacystis nidulans R2).